The sequence spans 362 residues: Guanine nucleotide-binding protein alpha-10 subunit (362 aa).

A lipid anchor (N-myristoyl glycine) is attached at G2. C4 carries the S-palmitoyl cysteine lipid modification. The region spanning 35–362 (LEQSVLLIGP…QENLKDTGMI (328 aa)) is the G-alpha domain. The interval 38–51 (SVLLIGPGESGKST) is G1 motif. Residues 43-50 (GPGESGKS), 184-190 (VRIRVPT), 209-213 (DCGGQ), 278-281 (NKID), and A335 each bind GTP. Mg(2+)-binding residues include S50 and T190. A G2 motif region spans residues 182 to 190 (DIVRIRVPT). Residues 205 to 214 (LSVIDCGGQR) are G3 motif. Positions 274 to 281 (ILFLNKID) are G4 motif. The G5 motif stretch occupies residues 333 to 337 (TCAIS).

This sequence belongs to the G-alpha family. G proteins are composed of 3 units; alpha, beta and gamma. The alpha chain contains the guanine nucleotide binding site.

Functionally, guanine nucleotide-binding proteins (G proteins) are involved as modulators or transducers in various transmembrane signaling systems. This chain is Guanine nucleotide-binding protein alpha-10 subunit (gpa-10), found in Caenorhabditis briggsae.